Reading from the N-terminus, the 293-residue chain is 4-hydroxy-tetrahydrodipicolinate synthase (293 aa).

Threonine 47 serves as a coordination point for pyruvate. Tyrosine 136 serves as the catalytic Proton donor/acceptor. Catalysis depends on lysine 164, which acts as the Schiff-base intermediate with substrate. Isoleucine 206 is a binding site for pyruvate.

This sequence belongs to the DapA family. In terms of assembly, homotetramer; dimer of dimers.

It is found in the cytoplasm. The catalysed reaction is L-aspartate 4-semialdehyde + pyruvate = (2S,4S)-4-hydroxy-2,3,4,5-tetrahydrodipicolinate + H2O + H(+). It functions in the pathway amino-acid biosynthesis; L-lysine biosynthesis via DAP pathway; (S)-tetrahydrodipicolinate from L-aspartate: step 3/4. Catalyzes the condensation of (S)-aspartate-beta-semialdehyde [(S)-ASA] and pyruvate to 4-hydroxy-tetrahydrodipicolinate (HTPA). In Listeria monocytogenes serotype 4b (strain CLIP80459), this protein is 4-hydroxy-tetrahydrodipicolinate synthase.